We begin with the raw amino-acid sequence, 470 residues long: MDTSRVLLSAVFLISFLWDLPGFQQASISSSSSSAELGSAKGMRSRKEGRMPRAPRENATAREPLDRQEPPPRPQEEPQRRPPQQPEAREPPGRGPRVVPHEYMLSIYRTYSIAEKLGINASFFQSSKSANTITSFVDRGLDDLSHTPLRRQKYLFDVSTLSDKEELVGAELRLFRQAPAAPWGPPAGPLRLQLFACQSPLLLEARSLDPQGAPRPGWEVFDVWRGLRPQPWKQLCLELRAAWGGEPGAAEDEARAPGPQQPPPPDLRSLGFGRRVRTPQERALLVVFSRSQRKTLFAEMREQLGSATEVVGPGGGAEGSGPPPPPPPPPPSGTPDAGLWSPSPGRRRRRTAFASRHGKRHGKKSRLRCSKKPLHVNFKELGWDDWIIAPLEYEAYHCEGVCDFPLRSHLEPTNHAIIQTLMNSMDPGSTPPSCCVPTKLTPISILYIDAGNNVVYKQYEEMVVESCGCR.

The N-terminal stretch at 1–22 (MDTSRVLLSAVFLISFLWDLPG) is a signal peptide. Residues 23–350 (FQQASISSSS…SPSPGRRRRR (328 aa)) constitute a propeptide that is removed on maturation. A disordered region spans residues 28 to 98 (ISSSSSSAEL…REPPGRGPRV (71 aa)). Residues 45 to 80 (SRKEGRMPRAPRENATAREPLDRQEPPPRPQEEPQR) show a composition bias toward basic and acidic residues. Residue N120 is glycosylated (N-linked (GlcNAc...) asparagine). Disordered regions lie at residues 247–272 (PGAAEDEARAPGPQQPPPPDLRSLGF) and 308–366 (TEVV…KKSR). Residues 321 to 333 (GPPPPPPPPPPSG) show a composition bias toward pro residues. Residues 345 to 366 (GRRRRRTAFASRHGKRHGKKSR) show a composition bias toward basic residues. Intrachain disulfides connect C369-C435, C398-C467, and C402-C469.

The protein belongs to the TGF-beta family. Homodimer; disulfide-linked.

It is found in the secreted. Functionally, growth factor that controls proliferation and cellular differentiation in the retina and bone formation. Plays a key role in regulating apoptosis during retinal development. Establishes dorsal-ventral positional information in the retina and controls the formation of the retinotectal map. Required for normal formation of bones and joints in the limbs, skull, digits and axial skeleton. Plays a key role in establishing boundaries between skeletal elements during development. Regulation of GDF6 expression seems to be a mechanism for evolving species-specific changes in skeletal structures. Seems to positively regulate differentiation of chondrogenic tissue through the growth factor receptors subunits BMPR1A, BMPR1B, BMPR2 and ACVR2A, leading to the activation of SMAD1-SMAD5-SMAD8 complex. The regulation of chondrogenic differentiation is inhibited by NOG. Also involved in the induction of adipogenesis from mesenchymal stem cells. This mechanism acts through the growth factor receptors subunits BMPR1A, BMPR2 and ACVR2A and the activation of SMAD1-SMAD5-SMAD8 complex and MAPK14/p38. This chain is Growth/differentiation factor 6 (GDF6), found in Bos taurus (Bovine).